A 577-amino-acid polypeptide reads, in one-letter code: Aspartate--tRNA(Asp/Asn) ligase (577 aa).

Position 171 (Glu171) interacts with L-aspartate. An aspartate region spans residues 195 to 198 (QLFK). Arg217 lines the L-aspartate pocket. ATP contacts are provided by residues 217 to 219 (RDE) and Gln226. His444 contacts L-aspartate. Glu474 contacts ATP. Arg481 contacts L-aspartate. 526–529 (GFDR) contacts ATP.

It belongs to the class-II aminoacyl-tRNA synthetase family. Type 1 subfamily. Homodimer.

It localises to the cytoplasm. The enzyme catalyses tRNA(Asx) + L-aspartate + ATP = L-aspartyl-tRNA(Asx) + AMP + diphosphate. Functionally, aspartyl-tRNA synthetase with relaxed tRNA specificity since it is able to aspartylate not only its cognate tRNA(Asp) but also tRNA(Asn). Reaction proceeds in two steps: L-aspartate is first activated by ATP to form Asp-AMP and then transferred to the acceptor end of tRNA(Asp/Asn). In Helicobacter pylori (strain Shi470), this protein is Aspartate--tRNA(Asp/Asn) ligase.